A 127-amino-acid chain; its full sequence is Small ribosomal subunit protein uS11 (127 aa).

Belongs to the universal ribosomal protein uS11 family. As to quaternary structure, part of the 30S ribosomal subunit. Interacts with proteins S7 and S18. Binds to IF-3.

Located on the platform of the 30S subunit, it bridges several disparate RNA helices of the 16S rRNA. Forms part of the Shine-Dalgarno cleft in the 70S ribosome. The protein is Small ribosomal subunit protein uS11 of Chlorobaculum parvum (strain DSM 263 / NCIMB 8327) (Chlorobium vibrioforme subsp. thiosulfatophilum).